We begin with the raw amino-acid sequence, 421 residues long: MDRVLSRADKERLLELLKLPRQLWGDFGRMQQAYKQQSLLLHPDKGGSHALMQELNSLWGTFKTEVYNLRMNLGGTGFQVRRLHADGWNLSTKDTFGDRYYQRFCRMPLTCLVNVKYSSCSCILCLLRKQHRELKDKCDARCLVLGECFCLECYMQWFGTPTRDVLNLYADFIASMPIDWLDLDVHSVYNPRTRSEELRRAATVHYTMTTGHSAMEASTSQGNGMISSESGTPAISRRLRLPSLLSNPTYSVMRSHSFPPTRVLQQIHPHILLEDDETLVLLSPMTAYPRTPPELLYPESDQDQLEPLEEEEEEYMPMEDLYLDILPEEQVPQLIPPPIIPRAGLSPWEGLILRDLQRAHFDPILEASQRMRATHRAALRAHSMQRHLRRLGRTLLLVTFLAALLGICLMLFILIKRSRHF.

The Cytoplasmic portion of the chain corresponds to 1 to 394 (MDRVLSRADK…QRHLRRLGRT (394 aa)). A J domain is found at 12–75 (RLLELLKLPR…VYNLRMNLGG (64 aa)). A Phosphotyrosine; by host modification is found at tyrosine 250. Position 257 is a phosphoserine; by host (serine 257). Tyrosine 315 and tyrosine 322 each carry phosphotyrosine; by host. Residues 395-415 (LLLVTFLAALLGICLMLFILI) traverse the membrane as a helical segment. Topologically, residues 416–421 (KRSRHF) are extracellular.

In terms of assembly, interacts with host Ppp2/PP2A A and C subunits; this interaction alters Ppp2/PP2A substrate specificity and localization. Interacts with host Src, Yes1, and Fyn. Interacts with host Shc1, Plcg1 and p85; these interactions lead to cell cycle progression. Interacts with host 14-3-3 proteins. In terms of processing, tyrosine-phosphorylated on three residues 250, 315 and 322, providing docking sites for host Shc1, p85, and Plcg1, respectively.

It localises to the host membrane. In terms of biological role, plays a role in transformation by modulating the activities of cellular proteins involved in control of cell proliferation and by acting as a functional homolog of an activated tyrosine kinase-associated growth-factor receptor. Recruits upon association with host Ppp2/PP2A the Src tyrosine kinase components Src, Yes and Fyn, thereby activating their kinase activity. Activation of Shc1, Pclg1 and p85 mediate signal transduction pathways leading to cell cycle progression and cell division. MT also plays a role in regulation of early and late gene expression and in viral DNA replication. The protein is Middle T antigen of Mus musculus (Mouse).